The following is a 164-amino-acid chain: Large ribosomal subunit protein uL10 (164 aa).

This sequence belongs to the universal ribosomal protein uL10 family. In terms of assembly, part of the ribosomal stalk of the 50S ribosomal subunit. The N-terminus interacts with L11 and the large rRNA to form the base of the stalk. The C-terminus forms an elongated spine to which L12 dimers bind in a sequential fashion forming a multimeric L10(L12)X complex.

Forms part of the ribosomal stalk, playing a central role in the interaction of the ribosome with GTP-bound translation factors. This is Large ribosomal subunit protein uL10 (rplJ) from Helicobacter pylori (strain J99 / ATCC 700824) (Campylobacter pylori J99).